The following is a 169-amino-acid chain: Cilia- and flagella-associated protein 276 (169 aa).

Disordered stretches follow at residues 26 to 45 (SKKL…EPWS) and 150 to 169 (HTAA…FFST). Polar residues predominate over residues 36–45 (HLAQQQEPWS). Residues 160–169 (RKKDGGFFST) are compositionally biased toward basic and acidic residues.

As to quaternary structure, microtubule inner protein component of sperm flagellar doublet microtubules. As to expression, expressed in cerebrum, cerebellum, gastrocnemius muscle, spinal cord and lung tissues.

It localises to the cytoplasm. The protein localises to the cytoskeleton. The protein resides in the flagellum axoneme. It is found in the cilium axoneme. Its function is as follows. Microtubule inner protein (MIP) part of the dynein-decorated doublet microtubules (DMTs) in cilia axoneme, which is required for motile cilia beating. May play an important role for the maintenance of myelin-axon integrity. May affect intracellular Ca(2+) homeostasis. This Homo sapiens (Human) protein is Cilia- and flagella-associated protein 276.